The primary structure comprises 327 residues: MGCASEIQAEIFTSFGQLFYASFQTILFLATIIGSLLAIFELCKKTTVPDSTRVLLIGSLFFANAHEFAYFTAPLKVFQLNIFNTNTSCYPLISTRDCIPTTTVLAMGISGNMLIQSALSIDRLLATIFPFSYSRMRALPGFVLLIMVLIPAMFTYSWIRLDIVLDDYQMFCSQWSANISTRANTFLEICSYLTVAHIIINCLIILRNRAIEKRCRFDVTQRYLTSENLKTTQAICYLSIAQFLAMFMYSGGVLLMRKNRENIPTLIYFNVIVWVYAPPYACVSLAPLILFSLWNLKKQRHIQIKSVQSAQKETQDDYIRKLQKSWK.

Topologically, residues 1-18 are extracellular; it reads MGCASEIQAEIFTSFGQL. Residues 19 to 39 form a helical membrane-spanning segment; the sequence is FYASFQTILFLATIIGSLLAI. Topologically, residues 40–53 are cytoplasmic; it reads FELCKKTTVPDSTR. Residues 54 to 74 form a helical membrane-spanning segment; it reads VLLIGSLFFANAHEFAYFTAP. Over 75–98 the chain is Extracellular; sequence LKVFQLNIFNTNTSCYPLISTRDC. The chain crosses the membrane as a helical span at residues 99–119; it reads IPTTTVLAMGISGNMLIQSAL. Residues 120 to 138 lie on the Cytoplasmic side of the membrane; sequence SIDRLLATIFPFSYSRMRA. A helical membrane pass occupies residues 139–159; sequence LPGFVLLIMVLIPAMFTYSWI. Residues 160-185 lie on the Extracellular side of the membrane; it reads RLDIVLDDYQMFCSQWSANISTRANT. A helical transmembrane segment spans residues 186–206; that stretch reads FLEICSYLTVAHIIINCLIIL. At 207-234 the chain is on the cytoplasmic side; it reads RNRAIEKRCRFDVTQRYLTSENLKTTQA. The helical transmembrane segment at 235 to 255 threads the bilayer; sequence ICYLSIAQFLAMFMYSGGVLL. At 256 to 270 the chain is on the extracellular side; the sequence is MRKNRENIPTLIYFN. A helical membrane pass occupies residues 271–291; sequence VIVWVYAPPYACVSLAPLILF. The Cytoplasmic portion of the chain corresponds to 292–327; the sequence is SLWNLKKQRHIQIKSVQSAQKETQDDYIRKLQKSWK.

This sequence belongs to the nematode receptor-like protein sra family. As to expression, expressed in neurons RIF/RIG and PVT.

The protein resides in the membrane. This is Serpentine receptor class alpha-12 (sra-12) from Caenorhabditis elegans.